Here is a 105-residue protein sequence, read N- to C-terminus: MSWIILVIAGLLEVVWAVGLKYTHGFSRLTPSVITVTAMIVSLALLAWAMKSLPVGTAYAVWTGIGAVGAAITGIVLLGESANPMRLASLALIVLGIIGLKLSTH.

A helical transmembrane segment spans residues 1–21; sequence MSWIILVIAGLLEVVWAVGLK. The Cytoplasmic segment spans residues 22–28; that stretch reads YTHGFSR. The chain crosses the membrane as a helical span at residues 29–49; the sequence is LTPSVITVTAMIVSLALLAWA. The Periplasmic segment spans residues 50 to 57; the sequence is MKSLPVGT. A helical transmembrane segment spans residues 58–78; sequence AYAVWTGIGAVGAAITGIVLL. Residues 79 to 81 are Cytoplasmic-facing; it reads GES. The chain crosses the membrane as a helical span at residues 82–102; sequence ANPMRLASLALIVLGIIGLKL. The Periplasmic segment spans residues 103-105; it reads STH.

Belongs to the drug/metabolite transporter (DMT) superfamily. Small multidrug resistance (SMR) (TC 2.A.7.1) family. Gdx/SugE subfamily.

Its subcellular location is the cell inner membrane. Functionally, guanidinium ion exporter. Couples guanidinium export to the proton motive force, exchanging one guanidinium ion for two protons. This Escherichia coli O6:H1 (strain CFT073 / ATCC 700928 / UPEC) protein is Guanidinium exporter.